Consider the following 131-residue polypeptide: Sec-independent protein translocase protein TatB (131 aa).

A helical transmembrane segment spans residues 1 to 21; that stretch reads MFDISFAELVVVGIVALIVIG. Composition is skewed to polar residues over residues 71 to 93 and 111 to 131; these read NSFENSVRSEINKIQETTETQSA and PVNTSETKTSSAPAEPRQPNS. A disordered region spans residues 71–131; that stretch reads NSFENSVRSE…APAEPRQPNS (61 aa).

The protein belongs to the TatB family. As to quaternary structure, the Tat system comprises two distinct complexes: a TatABC complex, containing multiple copies of TatA, TatB and TatC subunits, and a separate TatA complex, containing only TatA subunits. Substrates initially bind to the TatABC complex, which probably triggers association of the separate TatA complex to form the active translocon.

It is found in the cell inner membrane. In terms of biological role, part of the twin-arginine translocation (Tat) system that transports large folded proteins containing a characteristic twin-arginine motif in their signal peptide across membranes. Together with TatC, TatB is part of a receptor directly interacting with Tat signal peptides. TatB may form an oligomeric binding site that transiently accommodates folded Tat precursor proteins before their translocation. This Nitrosomonas europaea (strain ATCC 19718 / CIP 103999 / KCTC 2705 / NBRC 14298) protein is Sec-independent protein translocase protein TatB.